Here is a 354-residue protein sequence, read N- to C-terminus: G-protein coupled estrogen receptor 1 (354 aa).

Topologically, residues 1 to 40 (MEEQTTSLVWIYVNSTEQLNTSYEYNTTYLIEDSDKYQSY) are extracellular. A helical transmembrane segment spans residues 41–61 (VIGLFLSCLYTILLFPIGFIG). Residues 62-81 (NILILVVNLNHRGKMAIPDL) lie on the Cytoplasmic side of the membrane. The chain crosses the membrane as a helical span at residues 82-102 (YFVNLAVADLILVADSLIEVF). Residues 103–112 (NLNEKYYDYA) are Extracellular-facing. A helical membrane pass occupies residues 113–133 (VLCTFMSLFLQVNMYSSIFFL). Cysteines 115 and 192 form a disulfide. Topologically, residues 134–160 (TWMSFDRYIALANSMSSSPLRTMQHAK) are cytoplasmic. A helical membrane pass occupies residues 161 to 181 (LSCGLIWMASILATLLPFTIV). Residues 182–202 (QTQHRGEVHFCFANVFEIQWL) lie on the Extracellular side of the membrane. A helical transmembrane segment spans residues 203-223 (EVTIGFLVPFSIIGLCYSLIG). The Cytoplasmic portion of the chain corresponds to 224-245 (RILMRSQKHRGLWPRRQKALRM). A helical membrane pass occupies residues 246 to 266 (IVVVVLVFFICWLPENVFISI). Topologically, residues 267 to 292 (QLLQGTADPSQRTATTLRHDYPLTGH) are extracellular. A helical membrane pass occupies residues 293–313 (IVNLAAFSNSCLNPIIYSFLG). Residues 314–353 (ETFRDKLRLFIKQKASWSVVNRFCHHGLDLHLPVRSEVSE) lie on the Cytoplasmic side of the membrane.

Belongs to the G-protein coupled receptor 1 family. Homodimer. Heterodimer. In terms of tissue distribution, expressed in oocytes (at protein level). Highly expressed in brain, heart, testis and ovary. Weakly expressed in muscle and intestine.

It localises to the nucleus. It is found in the cytoplasm. Its subcellular location is the perinuclear region. The protein resides in the cytoskeleton. The protein localises to the cytoplasmic vesicle membrane. It localises to the cell membrane. It is found in the basolateral cell membrane. Its subcellular location is the endoplasmic reticulum membrane. The protein resides in the early endosome. The protein localises to the recycling endosome. It localises to the golgi apparatus. It is found in the trans-Golgi network. Its subcellular location is the golgi apparatus membrane. The protein resides in the cell projection. The protein localises to the dendrite. It localises to the dendritic spine membrane. It is found in the axon. Its subcellular location is the postsynaptic density. The protein resides in the mitochondrion membrane. In terms of biological role, membrane G-protein coupled estrogen receptor that binds to 17-beta-estradiol (E2) with high affinity, leading to rapid and transient activation of numerous intracellular signaling pathways. Plays a role in the embryonic development of sensory and motor neurons. May induce apoptosis and reduce proliferation of brain cells. Involved in maintenance of meiotic arrest in oocytes. The polypeptide is G-protein coupled estrogen receptor 1 (gper1) (Micropogonias undulatus (Atlantic croaker)).